A 446-amino-acid polypeptide reads, in one-letter code: Mitochondrial distribution and morphology protein 12 (446 aa).

The SMP-LTD domain occupies 1–446 (MSIDINWEAA…VYPSFWTFLV (446 aa)). Positions 75-85 (DNEIGDGEVSD) are enriched in acidic residues. 3 disordered regions span residues 75–106 (DNEI…SAAD), 126–145 (PHDV…PIRS), and 188–283 (TPLS…RVRE). A compositionally biased stretch (basic and acidic residues) spans 126–138 (PHDVPIPSKEDPL). Polar residues predominate over residues 233-246 (TGNSRPSTADTLDS). The segment covering 260-274 (SSDDAHPNVLPRRDN) has biased composition (basic and acidic residues).

It belongs to the MDM12 family. As to quaternary structure, component of the ER-mitochondria encounter structure (ERMES) or MDM complex, composed of MMM1, MDM10, MDM12 and MDM34. An MMM1 homodimer associates with one molecule of MDM12 on each side in a pairwise head-to-tail manner, and the SMP-LTD domains of MMM1 and MDM12 generate a continuous hydrophobic tunnel for phospholipid trafficking.

It localises to the mitochondrion outer membrane. It is found in the endoplasmic reticulum membrane. Functionally, component of the ERMES/MDM complex, which serves as a molecular tether to connect the endoplasmic reticulum (ER) and mitochondria. Components of this complex are involved in the control of mitochondrial shape and protein biogenesis, and function in nonvesicular lipid trafficking between the ER and mitochondria. MDM12 is required for the interaction of the ER-resident membrane protein MMM1 and the outer mitochondrial membrane-resident beta-barrel protein MDM10. The MDM12-MMM1 subcomplex functions in the major beta-barrel assembly pathway that is responsible for biogenesis of all mitochondrial outer membrane beta-barrel proteins, and acts in a late step after the SAM complex. The MDM10-MDM12-MMM1 subcomplex further acts in the TOM40-specific pathway after the action of the MDM12-MMM1 complex. Essential for establishing and maintaining the structure of mitochondria and maintenance of mtDNA nucleoids. The protein is Mitochondrial distribution and morphology protein 12 of Coccidioides immitis (strain RS) (Valley fever fungus).